Consider the following 4471-residue polypeptide: Dynein axonemal heavy chain 10 (4471 aa).

Residues 1–1793 (MVPEEVEVEI…NIRQCTGTFG (1793 aa)) are stem. A disordered region spans residues 46–65 (TESLGQPLNREDEEMDKEIS). 4 coiled-coil regions span residues 203–223 (NVQKFASNIQRTMQQLEGEIK), 602–622 (QEVKQKYLEVGRTMKEYEDRK), 1071–1106 (KLLNESAKEELYNLHEEMEHLAKNLRKIPNTLEDLK), and 1217–1245 (VELLGVYERELARHEKSRQELANAEKLFD). The N-linked (GlcNAc...) asparagine glycan is linked to asparagine 1074. The TPR 1 repeat unit spans residues 1221 to 1254 (GVYERELARHEKSRQELANAEKLFDLPITMYPEL). AAA stretches follow at residues 1794 to 2015 (YGYE…VLVM), 2075 to 2294 (DAVE…VIVE), 2417 to 2665 (IHAP…VFNG), and 2765 to 3014 (EYNE…LRRS). Positions 1832 to 1839 (GPAGTGKT) match the GPAGTGKT motif motif. 1832 to 1839 (GPAGTGKT) lines the ATP pocket. The short motif at 1882–1888 (CFDEFNR) is the CFDEFNR motif element. ATP-binding positions include 2113–2120 (GPTRGGKS) and 2455–2462 (GESGTSKT). 2 TPR repeats span residues 2736-2769 (MALHEGEPRIYEDIQDYEAAKALFQEILEEYNES) and 2771-2797 (TKMNLVLFDDALEHLTRVHRIIRMDRG). Positions 2747–2770 (EDIQDYEAAKALFQEILEEYNESN) form a coiled coil. An ATP-binding site is contributed by 2803–2810 (GVGGSGKQ). The tract at residues 3029-3313 (YSKLLDEKTQ…QKLQEEAEIM (285 aa)) is stalk. 3 coiled-coil regions span residues 3045–3131 (KRLD…LAEV), 3257–3327 (KREK…ISGL), and 3567–3638 (ERRE…EKTA). An AAA 5 region spans residues 3399-3629 (LTDDVEISRW…TKSKATEVSE (231 aa)). The stretch at 3802–3837 (WQEWYDLDSLEQFPVPLGYDNNITPFQKLLILRCFR) is one TPR 4 repeat. Positions 3845 to 4062 (VTDYVTVTMG…FQVCMEILNT (218 aa)) are AAA 6. One copy of the TPR 5 repeat lies at 4074 to 4108 (RIPWGSLKYLIGEVMYGGRAIDSFDRRILTIYMDE). Residues 4235–4260 (LLQELERFNKLVVRMTKSLAELQRAL) are a coiled coil.

Belongs to the dynein heavy chain family. In terms of assembly, consists of at least two heavy chains and a number of intermediate and light chains. As to expression, expressed primarily in trachea and testis, 2 tissues containing axonemal structures. Also expressed in brain but not in adult heart.

It localises to the cytoplasm. The protein localises to the cytoskeleton. Its subcellular location is the cilium axoneme. In terms of biological role, force generating protein of respiratory cilia. Produces force towards the minus ends of microtubules. Dynein has ATPase activity; the force-producing power stroke is thought to occur on release of ADP. Involved in sperm motility; implicated in sperm flagellar assembly. Probable inner arm dynein heavy chain. This is Dynein axonemal heavy chain 10 (DNAH10) from Homo sapiens (Human).